We begin with the raw amino-acid sequence, 852 residues long: MEIAAKMVKVRKMEMILLLILVIVVAATAANVTYDHRALVIDGKRKVLISGSIHYPRSTPEMWPELIQKSKDGGLDVIETYVFWSGHEPEKNKYNFEGRYDLVKFVKLAAKAGLYVHLRIGPYVCAEWNYGGFPVWLHFVPGIKFRTDNEPFKEEMQRFTTKIVDLMKQEKLYASQGGPIILSQIENEYGNIDSAYGAAAKSYIKWSASMALSLDTGVPWNMCQQTDAPDPMINTCNGFYCDQFTPNSNNKPKMWTENWSGWFLGFGDPSPYRPVEDLAFAVARFYQRGGTFQNYYMYHGGTNFDRTSGGPLISTSYDYDAPIDEYGLLRQPKWGHLRDLHKAIKLCEDALIATDPTITSLGSNLEAAVYKTESGSCAAFLANVDTKSDATVTFNGKSYNLPAWSVSILPDCKNVAFNTAKINSATESTAFARQSLKPDGGSSAELGSQWSYIKEPIGISKADAFLKPGLLEQINTTADKSDYLWYSLRTDIKGDETFLDEGSKAVLHIESLGQVVYAFINGKLAGSGHGKQKISLDIPINLVTGTNTIDLLSVTVGLANYGAFFDLVGAGITGPVTLKSAKGGSSIDLASQQWTYQVGLKGEDTGLATVDSSEWVSKSPLPTKQPLIWYKTTFDAPSGSEPVAIDFTGTGKGIAWVNGQSIGRYWPTSIAGNGGCTESCDYRGSYRANKCLKNCGKPSQTLYHVPRSWLKPSGNILVLFEEMGGDPTQISFATKQTGSNLCLTVSQSHPPPVDTWTSDSKISNRNRTRPVLSLKCPISTQVIFSIKFASFGTPKGTCGSFTQGHCNSSRSLSLVQKACIGLRSCNVEVSTRVFGEPCRGVVKSLAVEASCS.

A signal peptide spans 1 to 29 (MEIAAKMVKVRKMEMILLLILVIVVAATA). N-linked (GlcNAc...) asparagine glycosylation is present at Asn31. Glu188 acts as the Proton donor in catalysis. Glu257 serves as the catalytic Nucleophile. N-linked (GlcNAc...) asparagine glycosylation is found at Asn258, Asn475, Asn766, and Asn807. Positions 766 to 852 (NRTRPVLSLK…KSLAVEASCS (87 aa)) constitute an SUEL-type lectin domain.

Belongs to the glycosyl hydrolase 35 family. As to expression, expressed in roots, flowers and siliques.

The protein localises to the secreted. The protein resides in the extracellular space. Its subcellular location is the apoplast. It carries out the reaction Hydrolysis of terminal non-reducing beta-D-galactose residues in beta-D-galactosides.. This chain is Beta-galactosidase 8 (BGAL8), found in Arabidopsis thaliana (Mouse-ear cress).